The sequence spans 142 residues: Small heat shock protein IbpB (142 aa).

Residues 26-137 (SGESQSFPPY…PPQRIAINER (112 aa)) enclose the sHSP domain.

Belongs to the small heat shock protein (HSP20) family. Homodimer. Forms homomultimers of about 100-150 subunits at optimal growth temperatures. Conformation changes to oligomers at high temperatures or high ionic concentrations. The decrease in size of the multimers is accompanied by an increase in chaperone activity.

It is found in the cytoplasm. Associates with aggregated proteins, together with IbpA, to stabilize and protect them from irreversible denaturation and extensive proteolysis during heat shock and oxidative stress. Aggregated proteins bound to the IbpAB complex are more efficiently refolded and reactivated by the ATP-dependent chaperone systems ClpB and DnaK/DnaJ/GrpE. Its activity is ATP-independent. This chain is Small heat shock protein IbpB, found in Salmonella typhi.